A 154-amino-acid chain; its full sequence is Transcriptional repressor NrdR (154 aa).

The disordered stretch occupies residues 1–22; that stretch reads MRCPFCAHDDSQVKDSRPTDDG. A zinc finger spans residues 3–34; the sequence is CPFCAHDDSQVKDSRPTDDGAAIRRRRQCEGC. Residues 7–22 show a composition bias toward basic and acidic residues; that stretch reads AHDDSQVKDSRPTDDG. Residues 49 to 139 form the ATP-cone domain; that stretch reads MTVVKSDGRR…VYKDFREAKD (91 aa).

Belongs to the NrdR family. Requires Zn(2+) as cofactor.

Negatively regulates transcription of bacterial ribonucleotide reductase nrd genes and operons by binding to NrdR-boxes. The chain is Transcriptional repressor NrdR from Rhizorhabdus wittichii (strain DSM 6014 / CCUG 31198 / JCM 15750 / NBRC 105917 / EY 4224 / RW1) (Sphingomonas wittichii).